We begin with the raw amino-acid sequence, 125 residues long: Small ribosomal subunit protein uS12 (125 aa).

The tract at residues 1–28 (MPTISQLIGSERKRLTRKTKSPALKSCP) is disordered. 3-methylthioaspartic acid is present on Asp89. Residues 104-125 (TAGVKDRRQSRSKYGAKAPKND) are disordered.

It belongs to the universal ribosomal protein uS12 family. In terms of assembly, part of the 30S ribosomal subunit. Contacts proteins S8 and S17. May interact with IF1 in the 30S initiation complex.

Its function is as follows. With S4 and S5 plays an important role in translational accuracy. Interacts with and stabilizes bases of the 16S rRNA that are involved in tRNA selection in the A site and with the mRNA backbone. Located at the interface of the 30S and 50S subunits, it traverses the body of the 30S subunit contacting proteins on the other side and probably holding the rRNA structure together. The combined cluster of proteins S8, S12 and S17 appears to hold together the shoulder and platform of the 30S subunit. This is Small ribosomal subunit protein uS12 from Prochlorococcus marinus subsp. pastoris (strain CCMP1986 / NIES-2087 / MED4).